We begin with the raw amino-acid sequence, 372 residues long: Queuine tRNA-ribosyltransferase (372 aa).

Asp89 serves as the catalytic Proton acceptor. Substrate contacts are provided by residues 89–93 (DSGGF), Asp161, and Gly232. The segment at 262–268 (GIGDLPS) is RNA binding. The active-site Nucleophile is the Asp281. Residues 286-290 (TKAAR) form an RNA binding; important for wobble base 34 recognition region. Residues Cys319, Cys321, Cys324, and His351 each coordinate Zn(2+).

Belongs to the queuine tRNA-ribosyltransferase family. As to quaternary structure, homodimer. Within each dimer, one monomer is responsible for RNA recognition and catalysis, while the other monomer binds to the replacement base PreQ1. Zn(2+) is required as a cofactor.

It carries out the reaction 7-aminomethyl-7-carbaguanine + guanosine(34) in tRNA = 7-aminomethyl-7-carbaguanosine(34) in tRNA + guanine. It functions in the pathway tRNA modification; tRNA-queuosine biosynthesis. Its function is as follows. Catalyzes the base-exchange of a guanine (G) residue with the queuine precursor 7-aminomethyl-7-deazaguanine (PreQ1) at position 34 (anticodon wobble position) in tRNAs with GU(N) anticodons (tRNA-Asp, -Asn, -His and -Tyr). Catalysis occurs through a double-displacement mechanism. The nucleophile active site attacks the C1' of nucleotide 34 to detach the guanine base from the RNA, forming a covalent enzyme-RNA intermediate. The proton acceptor active site deprotonates the incoming PreQ1, allowing a nucleophilic attack on the C1' of the ribose to form the product. After dissociation, two additional enzymatic reactions on the tRNA convert PreQ1 to queuine (Q), resulting in the hypermodified nucleoside queuosine (7-(((4,5-cis-dihydroxy-2-cyclopenten-1-yl)amino)methyl)-7-deazaguanosine). This Chlamydia trachomatis serovar L2 (strain ATCC VR-902B / DSM 19102 / 434/Bu) protein is Queuine tRNA-ribosyltransferase.